The sequence spans 162 residues: Protein NrdI (162 aa).

The protein belongs to the NrdI family.

Its function is as follows. Probably involved in ribonucleotide reductase function. This chain is Protein NrdI, found in Streptococcus pyogenes serotype M2 (strain MGAS10270).